The chain runs to 285 residues: NAD kinase (285 aa).

The Proton acceptor role is filled by Asp64. NAD(+) contacts are provided by residues 64–65 (DG), 140–141 (ND), Arg151, Arg168, Asp170, and 181–186 (TGYNLS).

This sequence belongs to the NAD kinase family. It depends on a divalent metal cation as a cofactor.

It localises to the cytoplasm. The catalysed reaction is NAD(+) + ATP = ADP + NADP(+) + H(+). Involved in the regulation of the intracellular balance of NAD and NADP, and is a key enzyme in the biosynthesis of NADP. Catalyzes specifically the phosphorylation on 2'-hydroxyl of the adenosine moiety of NAD to yield NADP. The protein is NAD kinase of Lachnoclostridium phytofermentans (strain ATCC 700394 / DSM 18823 / ISDg) (Clostridium phytofermentans).